Reading from the N-terminus, the 575-residue chain is DNA polymerase lambda (575 aa).

In terms of domain architecture, BRCT spans Glu36–Ile132. The disordered stretch occupies residues Ala160–Gln205. The span at Leu166–Pro178 shows a compositional bias: pro residues. Residues Ser194–Glu203 show a composition bias toward acidic residues. A DNA-binding region spans residues Lys265–Tyr279. The Schiff-base intermediate with DNA role is filled by Lys312. Positions Gly345–Thr348 are DNA-binding. Residues Arg386, Ser417–Arg420, and Gly426–Asp429 each bind dCTP. Residues Arg420 to Asp429 form an involved in primer binding region. Mn(2+) contacts are provided by Asp427, Asp429, and Asp490. A DNA-binding region spans residues Glu466 to Tyr505. Asn513 serves as a coordination point for dCTP.

It belongs to the DNA polymerase type-X family. As to quaternary structure, interacts with PCNA. Interacts with PAXX; promoting POLL recruitment to double-strand breaks (DSBs) and stimulation of the end-filling activity of POLL. Interacts with XRCC4; promoting POLL recruitment to double-strand breaks (DSBs) and stimulation of the end-filling activity of POLL. Interacts with NHEJ1/XLF; promoting POLL recruitment to double-strand breaks (DSBs) and stimulation of the end-filling activity of POLL. Mn(2+) is required as a cofactor.

It is found in the nucleus. The catalysed reaction is DNA(n) + a 2'-deoxyribonucleoside 5'-triphosphate = DNA(n+1) + diphosphate. Functionally, DNA polymerase that functions in several pathways of DNA repair. Involved in base excision repair (BER) responsible for repair of lesions that give rise to abasic (AP) sites in DNA. Also contributes to DNA double-strand break repair by non-homologous end joining and homologous recombination. Has both template-dependent and template-independent (terminal transferase) DNA polymerase activities. Also has a 5'-deoxyribose-5-phosphate lyase (dRP lyase) activity. This is DNA polymerase lambda from Macaca fascicularis (Crab-eating macaque).